Here is a 177-residue protein sequence, read N- to C-terminus: Disulfide bond formation protein B (177 aa).

Residues 1–14 lie on the Cytoplasmic side of the membrane; the sequence is MMVWNWIDRTPRRV. Residues 15–31 form a helical membrane-spanning segment; sequence LALISLACVALLACGLY. The Periplasmic portion of the chain corresponds to 32–49; the sequence is LQHVVGLVPCPMCIVQRY. A disulfide bridge connects residues Cys-41 and Cys-44. Residues 50 to 64 form a helical membrane-spanning segment; it reads ALIGLALLTGLASAR. At 65-70 the chain is on the cytoplasmic side; it reads SAKGWW. A helical transmembrane segment spans residues 71–89; the sequence is LTLSALAALTAGFGATVAA. Residues 90 to 145 lie on the Periplasmic side of the membrane; it reads RQSWLQWYPPQSVSCGRDFYGMIESFPLSRAIPMILRGSGDCAAVDWSLLGGSIAN. Cys-104 and Cys-131 form a disulfide bridge. Residues 146–164 traverse the membrane as a helical segment; that stretch reads WSFLCFALLGLLLLALLAR. Residues 165–177 lie on the Cytoplasmic side of the membrane; that stretch reads GVRGARQRAPAPV.

This sequence belongs to the DsbB family.

Its subcellular location is the cell inner membrane. Its function is as follows. Required for disulfide bond formation in some periplasmic proteins. Acts by oxidizing the DsbA protein. This is Disulfide bond formation protein B from Verminephrobacter eiseniae (strain EF01-2).